Reading from the N-terminus, the 493-residue chain is Monodehydroascorbate reductase, chloroplastic/mitochondrial (493 aa).

A chloroplast and mitochondrion-targeting transit peptide spans 1–51 (MSAVRRVMALASTTLPTKSGLSLWCPSSPSLARRFPARFSPIGSRIASRSL). FAD is bound by residues 68–71 (GGNA), Glu-95, Arg-102, Lys-107, and 201–202 (RE). NAD(+)-binding positions include 224 to 230 (GGYIGME), Glu-248, Arg-254, and Gly-313. 226–230 (YIGME) is an NADP(+) binding site. NADP(+) is bound by residues Arg-254 and Gly-313. Position 351 (Asp-351) interacts with FAD. Residue 367–368 (EH) coordinates NAD(+). 367–368 (EH) lines the NADP(+) pocket. An FAD-binding site is contributed by Val-369. Arg-373 lines the L-ascorbate pocket. An FAD-binding site is contributed by Tyr-398. Tyr-398 provides a ligand contact to NAD(+). NADP(+) is bound at residue Tyr-398. Residue Arg-400 participates in L-ascorbate binding.

Belongs to the FAD-dependent oxidoreductase family. Interacts in vitro with TRXy. FAD serves as cofactor.

It localises to the plastid. Its subcellular location is the chloroplast. The protein localises to the mitochondrion. The catalysed reaction is 2 monodehydro-L-ascorbate radical + NADH + H(+) = 2 L-ascorbate + NAD(+). It catalyses the reaction 2,4,6-trinitrotoluene + NADH = 2,4,6-trinitrotoluene radical + e(-) + NAD(+). Redox regulation of the activity by thioredoxin TRXy1. In terms of biological role, catalyzes the conversion of monodehydroascorbate (MDA) to ascorbate, oxidizing NADH in the process. Mediates phytotoxicity of 2,4,6-trinitrotoluene (TNT), an explosive and environmental pollutant, by reducing TNT and forming a nitro radical that spontaneously reacts with atmospheric oxygen, generating reactive superoxide. Can also use 1-chloro-2,4-dinitrobenzene (CDNB) as substrate, but not 1-chloro-4-nitrobenzene (CNB). This chain is Monodehydroascorbate reductase, chloroplastic/mitochondrial, found in Arabidopsis thaliana (Mouse-ear cress).